The primary structure comprises 406 residues: Cysteine desulfurase (406 aa).

Lys-226 is modified (N6-(pyridoxal phosphate)lysine). Catalysis depends on Cys-364, which acts as the Cysteine persulfide intermediate.

It belongs to the class-V pyridoxal-phosphate-dependent aminotransferase family. Csd subfamily. In terms of assembly, homodimer. Interacts with SufE and the SufBCD complex composed of SufB, SufC and SufD. The interaction with SufE is required to mediate the direct transfer of the sulfur atom from the S-sulfanylcysteine. Requires pyridoxal 5'-phosphate as cofactor.

The protein resides in the cytoplasm. It catalyses the reaction (sulfur carrier)-H + L-cysteine = (sulfur carrier)-SH + L-alanine. The catalysed reaction is L-selenocysteine + AH2 = hydrogenselenide + L-alanine + A + H(+). It functions in the pathway cofactor biosynthesis; iron-sulfur cluster biosynthesis. Functionally, cysteine desulfurases mobilize the sulfur from L-cysteine to yield L-alanine, an essential step in sulfur metabolism for biosynthesis of a variety of sulfur-containing biomolecules. Component of the suf operon, which is activated and required under specific conditions such as oxidative stress and iron limitation. Acts as a potent selenocysteine lyase in vitro, that mobilizes selenium from L-selenocysteine. Selenocysteine lyase activity is however unsure in vivo. The polypeptide is Cysteine desulfurase (Escherichia coli O127:H6 (strain E2348/69 / EPEC)).